The sequence spans 183 residues: Large ribosomal subunit protein uL6 (183 aa).

Belongs to the universal ribosomal protein uL6 family. Part of the 50S ribosomal subunit.

Functionally, this protein binds to the 23S rRNA, and is important in its secondary structure. It is located near the subunit interface in the base of the L7/L12 stalk, and near the tRNA binding site of the peptidyltransferase center. The chain is Large ribosomal subunit protein uL6 from Methanococcus aeolicus (strain ATCC BAA-1280 / DSM 17508 / OCM 812 / Nankai-3).